Reading from the N-terminus, the 375-residue chain is Protein NDRG3 (375 aa).

Residues 326 to 375 (RSRTHSASSSGSMEIPRSRSHTSNAQLKSSSNNSLSNQIQETPQTIELSC) are disordered. The span at 348 to 363 (SNAQLKSSSNNSLSNQ) shows a compositional bias: low complexity. Over residues 364 to 375 (IQETPQTIELSC) the composition is skewed to polar residues.

Belongs to the NDRG family.

The sequence is that of Protein NDRG3 from Xenopus laevis (African clawed frog).